The chain runs to 740 residues: Alpha-1,6-mannosylglycoprotein 6-beta-N-acetylglucosaminyltransferase A (740 aa).

Residues 1 to 13 (MAFFSPWKLSSQK) are Cytoplasmic-facing. The helical; Signal-anchor for type II membrane protein transmembrane segment at 14-30 (LGFFLVTFGFIWGMMLL) threads the bilayer. Topologically, residues 31–740 (HFTIQQRTQP…GQVALCKDCL (710 aa)) are lumenal. N-linked (GlcNAc...) asparagine glycosylation is found at N109, N114, and N117. Disulfide bonds link C144-C182, C155-C195, C171-C337, C371-C625, C648-C723, C652-C725, C659-C712, C680-C701, and C736-C739. Positions 212–740 (NSLAEIRTDF…GQVALCKDCL (529 aa)) are sufficient for catalytic activity. The N-linked (GlcNAc...) asparagine glycan is linked to N333. 377–378 (DS) contacts substrate. N-linked (GlcNAc...) asparagine glycosylation is found at N432 and N446. E525 lines the UDP-N-acetyl-alpha-D-glucosamine pocket. Residue K553 coordinates substrate.

It belongs to the glycosyltransferase 18 family. N-glycosylated. Post-translationally, a secreted form is released from the membrane after cleavage by gamma-secretase. As to expression, detected in kidney (at protein level). Detected in kidney.

Its subcellular location is the golgi apparatus membrane. The protein localises to the secreted. The enzyme catalyses N(4)-{beta-D-GlcNAc-(1-&gt;2)-[beta-D-GlcNAc-(1-&gt;4)]-alpha-D-Man-(1-&gt;3)-[beta-D-GlcNAc-(1-&gt;2)-alpha-D-Man-(1-&gt;6)]-beta-D-Man-(1-&gt;4)-beta-D-GlcNAc-(1-&gt;4)-beta-D-GlcNAc}-L-asparaginyl-[protein] + UDP-N-acetyl-alpha-D-glucosamine = N(4)-{beta-D-GlcNAc-(1-&gt;2)-[beta-D-GlcNAc-(1-&gt;4)]-alpha-D-Man-(1-&gt;3)-[beta-D-GlcNAc-(1-&gt;2)-[beta-D-GlcNAc-(1-&gt;6)]-alpha-D-Man-(1-&gt;6)]-beta-D-Man-(1-&gt;4)-beta-D-GlcNAc-(1-&gt;4)-beta-D-GlcNAc}-L-asparaginyl-[protein] + UDP + H(+). It functions in the pathway protein modification; protein glycosylation. In terms of biological role, catalyzes the addition of N-acetylglucosamine (GlcNAc) in beta 1-6 linkage to the alpha-linked mannose of biantennary N-linked oligosaccharides. Catalyzes an important step in the biosynthesis of branched, complex-type N-glycans, such as those found on EGFR, TGFR (TGF-beta receptor) and CDH2. Via its role in the biosynthesis of complex N-glycans, plays an important role in the activation of cellular signaling pathways, reorganization of the actin cytoskeleton, cell-cell adhesion and cell migration. MGAT5-dependent EGFR N-glycosylation enhances the interaction between EGFR and LGALS3 and thereby prevents rapid EGFR endocytosis and prolongs EGFR signaling. Required for efficient interaction between TGFB1 and its receptor. Enhances activation of intracellular signaling pathways by several types of growth factors, including FGF2, PDGF, IGF, TGFB1 and EGF. MGAT5-dependent CDH2 N-glycosylation inhibits CDH2-mediated homotypic cell-cell adhesion and contributes to the regulation of downstream signaling pathways. Promotes cell migration. Contributes to the regulation of the inflammatory response. MGAT5-dependent TCR N-glycosylation enhances the interaction between TCR and LGALS3, limits agonist-induced TCR clustering, and thereby dampens TCR-mediated responses to antigens. Required for normal leukocyte evasation and accumulation at sites of inflammation. Inhibits attachment of monocytes to the vascular endothelium and subsequent monocyte diapedesis. Its function is as follows. Promotes proliferation of umbilical vein endothelial cells and angiogenesis, at least in part by promoting the release of the growth factor FGF2 from the extracellular matrix. This Rattus norvegicus (Rat) protein is Alpha-1,6-mannosylglycoprotein 6-beta-N-acetylglucosaminyltransferase A (Mgat5).